The sequence spans 32 residues: Parigidin-br1 (32 aa).

Positions glycine 1 to aspartate 32 form a cross-link, cyclopeptide (Gly-Asp). Cystine bridges form between cysteine 6–cysteine 22, cysteine 10–cysteine 24, and cysteine 15–cysteine 29.

In terms of processing, this is a cyclic peptide. In terms of tissue distribution, expressed in leaves, flowers, peduncles and seeds (at protein level).

In terms of biological role, probably participates in a plant defense mechanism. Reduces growth of and increases mortality in larvae of D.saccharalis. Kills cultured SF-9 cells of S.frugiperda probably by disrupting plasma membranes. Has hemolytic activity against human erythrocytes. Has no antibacterial activity against E.coli strain ATCC 8739 and S.aureus strain ATCC 25923. The polypeptide is Parigidin-br1 (Palicourea rigida).